The sequence spans 177 residues: Putative acetyltransferase FG08082 (177 aa).

The region spanning 81 to 174 (EEWEQVGLVR…VSIAMVEGPG (94 aa)) is the N-acetyltransferase domain.

The protein belongs to the acetyltransferase family.

It participates in mycotoxin biosynthesis. Its function is as follows. Putative acetyltransferase; part of the gene cluster that mediates the biosynthesis of butenolide, a mycotoxin that shows antibiotic activity but does not seem to play a major role in the spread of head blight in wheat. Butenolide is derived from glutamic acid via a 4-acetamido-2-butenoic acid intermediate. The predicted function of the NADH:flavin oxidoreductase FG08077, the cytochrome P450 monooxygenase FG08079, the decarboxylase FG08083, and the putative acetyltransferase FG08082 are consistent with this pathway, however, the respective activities of the butelonide biosynthesis cluster enzymes have still to be experimentally determined. In Gibberella zeae (strain ATCC MYA-4620 / CBS 123657 / FGSC 9075 / NRRL 31084 / PH-1) (Wheat head blight fungus), this protein is Putative acetyltransferase FG08082.